The sequence spans 232 residues: Small ribosomal subunit protein uS3 (232 aa).

The 69-residue stretch at 39 to 107 (IRKFLKTKLY…DIAINIKEER (69 aa)) folds into the KH type-2 domain. Positions 213 to 222 (QADKNEDTSP) are enriched in basic and acidic residues. Residues 213–232 (QADKNEDTSPKKPRRARRGK) are disordered. Residues 223–232 (KKPRRARRGK) show a composition bias toward basic residues.

It belongs to the universal ribosomal protein uS3 family. As to quaternary structure, part of the 30S ribosomal subunit. Forms a tight complex with proteins S10 and S14.

Functionally, binds the lower part of the 30S subunit head. Binds mRNA in the 70S ribosome, positioning it for translation. The protein is Small ribosomal subunit protein uS3 of Campylobacter fetus subsp. fetus (strain 82-40).